We begin with the raw amino-acid sequence, 645 residues long: Bifurcating [FeFe] hydrogenase alpha subunit (645 aa).

The region spanning 1–76 (MKIYVDGREV…GMKVKTNTPE (76 aa)) is the 2Fe-2S ferredoxin-type domain. Residues Cys34, Cys45, Cys48, and Cys60 each coordinate [2Fe-2S] cluster. Residues 76-115 (EIYEMRRNILELILATHNRDCTTCDRNGSCKLQKYAEDFG) enclose the 4Fe-4S His(Cys)3-ligated-type domain. 16 residues coordinate [4Fe-4S] cluster: His92, Cys96, Cys99, Cys105, Cys143, Cys146, Cys149, Cys153, Cys186, Cys189, Cys192, Cys196, Cys295, Cys350, Cys482, and Cys486. 4Fe-4S ferredoxin-type domains are found at residues 133–164 (SAPV…VIEF) and 178–206 (DTPL…IRND). Cys486 is a Fe(2+) binding site. Residues Cys575, Cys580, Cys612, and Cys616 each contribute to the [2Fe-2S] cluster site.

In terms of assembly, heterotrimer composed of HydA (alpha subunit), HydB (beta subunit) and HydC (gamma subunit). Near neutral and acidic pH conditions favor oligomerization of the heterotrimeric holoenzyme. Requires [2Fe-2S] cluster as cofactor. It depends on [4Fe-4S] cluster as a cofactor. Fe(2+) serves as cofactor.

It is found in the cytoplasm. The catalysed reaction is 2 H2 + 2 oxidized [2Fe-2S]-[ferredoxin] + NAD(+) = 2 reduced [2Fe-2S]-[ferredoxin] + NADH + 3 H(+). Catalyzes the oxidation of the physiological electron carriers NADH and reduced ferredoxin, coupled to the production of H(2). Acts as a bifurcating [FeFe] hydrogenase, which uses the exergonic oxidation of reduced ferredoxin to drive the unfavorable oxidation of NADH to produce H(2). The alpha subunit contains the catalytic H-cluster. The polypeptide is Bifurcating [FeFe] hydrogenase alpha subunit (Thermotoga maritima (strain ATCC 43589 / DSM 3109 / JCM 10099 / NBRC 100826 / MSB8)).